We begin with the raw amino-acid sequence, 379 residues long: Subtilisin Carlsberg (379 aa).

A signal peptide spans 1-29 (MMRKKSFWLGMLTAFMLVFTMAFSDSASA). A propeptide spanning residues 30 to 105 (AQPAKNVEKD…VEEDHVAHAL (76 aa)) is cleaved from the precursor. The Inhibitor I9 domain occupies 44 to 102 (FKSGVKTASVKKDIIKESGGKVDKQFRIINAAKAKLDKEALKEVKNDPDVAYVEEDHVA). A Ca(2+)-binding site is contributed by glutamine 107. Residues 110–378 (PYGIPLIKAD…KGLINVEAAA (269 aa)) form the Peptidase S8 domain. Residue aspartate 137 is the Charge relay system of the active site. A Ca(2+)-binding site is contributed by aspartate 146. Histidine 168 (charge relay system) is an active-site residue. Residues leucine 179, asparagine 181, threonine 183, valine 185, alanine 273, tyrosine 275, and valine 278 each coordinate Ca(2+). Catalysis depends on serine 325, which acts as the Charge relay system.

It belongs to the peptidase S8 family. Ca(2+) serves as cofactor.

It is found in the secreted. It carries out the reaction Hydrolysis of proteins with broad specificity for peptide bonds, and a preference for a large uncharged residue in P1. Hydrolyzes peptide amides.. Its activity is regulated as follows. Inhibited by p-chlorophenyl and 1-naphthyl boronic acid derivatives. In terms of biological role, subtilisin is an extracellular alkaline serine protease, it catalyzes the hydrolysis of proteins and peptide amides. Shows high specificity for aromatic and hydrophobic amino acids in the P1 substrate position. May play an important role in the degradation of feather keratin. The polypeptide is Subtilisin Carlsberg (Bacillus licheniformis).